Reading from the N-terminus, the 220-residue chain is Protein myomaker (220 aa).

Residue Met-1 is a topological domain, extracellular. Residues 2 to 22 traverse the membrane as a helical segment; the sequence is GAFIAKMLLPTISSLVFVPAA. The Cytoplasmic segment spans residues 23–37; sequence SVAAKRGFHMEAMVY. A helical transmembrane segment spans residues 38–58; that stretch reads FFTMFFTAIYHACDGPGLSIL. Residues 59-64 lie on the Extracellular side of the membrane; the sequence is CFMKYD. The chain crosses the membrane as a helical span at residues 65-85; it reads ILEYFSVYGTAISMWVTLLAL. Over 86 to 93 the chain is Cytoplasmic; the sequence is GDFDEPKR. The chain crosses the membrane as a helical span at residues 94–110; it reads SSLTMFGVLTAAVRIYQ. Residues 111–112 lie on the Extracellular side of the membrane; that stretch reads DR. The helical transmembrane segment at 113-133 threads the bilayer; it reads LGYGIYSGPIGTAVFMITVKW. The Cytoplasmic segment spans residues 134–153; it reads LQKMKEKKGLYPDKSVYTQQ. Residues 154-174 form a helical membrane-spanning segment; that stretch reads VGPGCCFGALALMLRFYFEEW. Residue Asp-175 is a topological domain, extracellular. Residues 176-196 form a helical membrane-spanning segment; sequence YAYVHSFYHVSLAMSFILLLP. Residues 197 to 220 lie on the Cytoplasmic side of the membrane; the sequence is KKNRYAGTGRNAAKLNCYTLCCCV.

The protein belongs to the TMEM8 family.

The protein resides in the cell membrane. In terms of biological role, myoblast-specific protein that mediates myoblast fusion, an essential step for the formation of multi-nucleated muscle fibers. Actively participates in the membrane fusion reaction by mediating the mixing of cell membrane lipids (hemifusion) upstream of mymx. In Danio rerio (Zebrafish), this protein is Protein myomaker.